We begin with the raw amino-acid sequence, 332 residues long: Ribosomal RNA small subunit methyltransferase H (332 aa).

S-adenosyl-L-methionine contacts are provided by residues 37-39 (GGY), Asp55, Phe82, Asp103, and Gln110. Residues 281–332 (TKRPVTPSDEETAANPRARSAKLRAGERTAAPAQPEAPLPHWPTLASVMGRR) form a disordered region.

Belongs to the methyltransferase superfamily. RsmH family.

It is found in the cytoplasm. The catalysed reaction is cytidine(1402) in 16S rRNA + S-adenosyl-L-methionine = N(4)-methylcytidine(1402) in 16S rRNA + S-adenosyl-L-homocysteine + H(+). In terms of biological role, specifically methylates the N4 position of cytidine in position 1402 (C1402) of 16S rRNA. The chain is Ribosomal RNA small subunit methyltransferase H from Rhodopseudomonas palustris (strain BisA53).